A 129-amino-acid chain; its full sequence is Small ribosomal subunit protein bS6 (129 aa).

A disordered region spans residues 103-129; the sequence is LKQKEERAERAPRREERAEAKPEAAAE. The segment covering 104–129 has biased composition (basic and acidic residues); sequence KQKEERAERAPRREERAEAKPEAAAE.

The protein belongs to the bacterial ribosomal protein bS6 family.

Functionally, binds together with bS18 to 16S ribosomal RNA. This Vibrio campbellii (strain ATCC BAA-1116) protein is Small ribosomal subunit protein bS6.